The following is a 217-amino-acid chain: uncharacterized protein (217 aa).

The region spanning Leu14 to Leu217 is the ABC transporter domain. Gly46–Thr53 provides a ligand contact to ATP.

The protein belongs to the ABC transporter superfamily.

This is an uncharacterized protein from Haemophilus influenzae (strain ATCC 51907 / DSM 11121 / KW20 / Rd).